A 445-amino-acid polypeptide reads, in one-letter code: Methionine aminopeptidase 2 (445 aa).

The disordered stretch occupies residues 1–80 (MAAQVASGVG…TSKVQTEPPR (80 aa)). Positions 57-71 (AKKKKKKTKKKKKGT) are enriched in basic residues. H195 contributes to the substrate binding site. A divalent metal cation contacts are provided by D215, D226, and H295. H303 serves as a coordination point for substrate. Positions 331 and 426 each coordinate a divalent metal cation.

Belongs to the peptidase M24A family. Methionine aminopeptidase eukaryotic type 2 subfamily. Requires Co(2+) as cofactor. Zn(2+) serves as cofactor. Mn(2+) is required as a cofactor. It depends on Fe(2+) as a cofactor.

It is found in the cytoplasm. It carries out the reaction Release of N-terminal amino acids, preferentially methionine, from peptides and arylamides.. In terms of biological role, cotranslationally removes the N-terminal methionine from nascent proteins. The N-terminal methionine is often cleaved when the second residue in the primary sequence is small and uncharged (Met-Ala-, Cys, Gly, Pro, Ser, Thr, or Val). The polypeptide is Methionine aminopeptidase 2 (Paracoccidioides brasiliensis (strain Pb18)).